A 231-amino-acid polypeptide reads, in one-letter code: UPF0173 metal-dependent hydrolase AF_1265 (231 aa).

The protein belongs to the UPF0173 family.

This Archaeoglobus fulgidus (strain ATCC 49558 / DSM 4304 / JCM 9628 / NBRC 100126 / VC-16) protein is UPF0173 metal-dependent hydrolase AF_1265.